Here is a 409-residue protein sequence, read N- to C-terminus: Elongation factor Tu, chloroplastic (409 aa).

In terms of domain architecture, tr-type G spans 10 to 214; sequence KPHVNIGTIG…AVDTYIPTPE (205 aa). Residues 19–26 are G1; it reads GHVDHGKT. Residue 19–26 participates in GTP binding; the sequence is GHVDHGKT. Residue threonine 26 participates in Mg(2+) binding. The tract at residues 60-64 is G2; that stretch reads GITIN. A G3 region spans residues 81–84; the sequence is DCPG. GTP is bound by residues 81 to 85 and 136 to 139; these read DCPGH and NKED. Residues 136 to 139 form a G4 region; the sequence is NKED. A G5 region spans residues 174–176; the sequence is SAL.

This sequence belongs to the TRAFAC class translation factor GTPase superfamily. Classic translation factor GTPase family. EF-Tu/EF-1A subfamily.

The protein localises to the plastid. Its subcellular location is the chloroplast. The enzyme catalyses GTP + H2O = GDP + phosphate + H(+). In terms of biological role, GTP hydrolase that promotes the GTP-dependent binding of aminoacyl-tRNA to the A-site of ribosomes during protein biosynthesis. The protein is Elongation factor Tu, chloroplastic (tufA) of Pyropia yezoensis (Susabi-nori).